The following is a 422-amino-acid chain: UDP-N-acetylglucosamine 1-carboxyvinyltransferase (422 aa).

Lys22–Asn23 provides a ligand contact to phosphoenolpyruvate. Arg93 provides a ligand contact to UDP-N-acetyl-alpha-D-glucosamine. Cys117 functions as the Proton donor in the catalytic mechanism. Cys117 bears the 2-(S-cysteinyl)pyruvic acid O-phosphothioketal mark. Residues Arg122–Leu126, Asp308, and Leu330 contribute to the UDP-N-acetyl-alpha-D-glucosamine site.

The protein belongs to the EPSP synthase family. MurA subfamily.

It is found in the cytoplasm. It carries out the reaction phosphoenolpyruvate + UDP-N-acetyl-alpha-D-glucosamine = UDP-N-acetyl-3-O-(1-carboxyvinyl)-alpha-D-glucosamine + phosphate. It participates in cell wall biogenesis; peptidoglycan biosynthesis. In terms of biological role, cell wall formation. Adds enolpyruvyl to UDP-N-acetylglucosamine. This Helicobacter pylori (strain ATCC 700392 / 26695) (Campylobacter pylori) protein is UDP-N-acetylglucosamine 1-carboxyvinyltransferase.